Here is a 338-residue protein sequence, read N- to C-terminus: MLISQRPTLTEEYVDSARSRFVIEPLEPGFGYTLGNSLRRTLLSSIPGAAVTSIKIDGVLHEFTTINGVKEDVSDIILNIKGLVLSSDSDEPVVMYLRKEGAGVITAGDIEPPAGVEIHNPDLHLATLNEQGRLDIEMIVERGRGYVPATLYSGPAEIGRIPVDQIYSPVLKVSYKVEATRVEQRTDFDKLIIDVETKNSMAPRDALASAGKTLVELFGLARELNTAAEGIEIGPSPQETEYIAAYGMPIEDLNFSVRSYNCLKRQEIHTVGELAECTESDLLDIRNFGQKSINEVKIKLAGLGLTLKDAPEDFDPTQLDGYDAATGDYIDTDPEETE.

The interval M1–N225 is alpha N-terminal domain (alpha-NTD). Positions Y242–E338 are alpha C-terminal domain (alpha-CTD). Positions F314–E338 are disordered.

This sequence belongs to the RNA polymerase alpha chain family. Homodimer. The RNAP catalytic core consists of 2 alpha, 1 beta, 1 beta' and 1 omega subunit. When a sigma factor is associated with the core the holoenzyme is formed, which can initiate transcription.

The catalysed reaction is RNA(n) + a ribonucleoside 5'-triphosphate = RNA(n+1) + diphosphate. Functionally, DNA-dependent RNA polymerase catalyzes the transcription of DNA into RNA using the four ribonucleoside triphosphates as substrates. This Corynebacterium diphtheriae (strain ATCC 700971 / NCTC 13129 / Biotype gravis) protein is DNA-directed RNA polymerase subunit alpha.